The following is a 398-amino-acid chain: Acetate kinase (398 aa).

A Mg(2+)-binding site is contributed by N7. Residue K14 participates in ATP binding. A substrate-binding site is contributed by R90. The active-site Proton donor/acceptor is D147. ATP contacts are provided by residues 207–211 (HLGNG), 282–284 (DMR), and 330–334 (GIGEN). Position 383 (E383) interacts with Mg(2+).

This sequence belongs to the acetokinase family. As to quaternary structure, homodimer. Requires Mg(2+) as cofactor. The cofactor is Mn(2+).

Its subcellular location is the cytoplasm. It catalyses the reaction acetate + ATP = acetyl phosphate + ADP. It functions in the pathway metabolic intermediate biosynthesis; acetyl-CoA biosynthesis; acetyl-CoA from acetate: step 1/2. In terms of biological role, catalyzes the formation of acetyl phosphate from acetate and ATP. Can also catalyze the reverse reaction. The protein is Acetate kinase of Symbiobacterium thermophilum (strain DSM 24528 / JCM 14929 / IAM 14863 / T).